The following is a 1086-amino-acid chain: Isoleucine--tRNA ligase (1086 aa).

The 'HIGH' region signature appears at P53–H63. Positions K624 to R628 match the 'KMSKS' region motif. Residue K627 coordinates ATP.

Belongs to the class-I aminoacyl-tRNA synthetase family. IleS type 2 subfamily. Monomer. Requires Zn(2+) as cofactor.

Its subcellular location is the cytoplasm. It carries out the reaction tRNA(Ile) + L-isoleucine + ATP = L-isoleucyl-tRNA(Ile) + AMP + diphosphate. In terms of biological role, catalyzes the attachment of isoleucine to tRNA(Ile). As IleRS can inadvertently accommodate and process structurally similar amino acids such as valine, to avoid such errors it has two additional distinct tRNA(Ile)-dependent editing activities. One activity is designated as 'pretransfer' editing and involves the hydrolysis of activated Val-AMP. The other activity is designated 'posttransfer' editing and involves deacylation of mischarged Val-tRNA(Ile). In Rickettsia prowazekii (strain Madrid E), this protein is Isoleucine--tRNA ligase.